A 90-amino-acid chain; its full sequence is Probable Fe(2+)-trafficking protein (90 aa).

Belongs to the Fe(2+)-trafficking protein family.

In terms of biological role, could be a mediator in iron transactions between iron acquisition and iron-requiring processes, such as synthesis and/or repair of Fe-S clusters in biosynthetic enzymes. This Idiomarina loihiensis (strain ATCC BAA-735 / DSM 15497 / L2-TR) protein is Probable Fe(2+)-trafficking protein.